The chain runs to 282 residues: Bifunctional protein FolD (282 aa).

NADP(+)-binding positions include Gly-166–Ser-168 and Ser-191.

The protein belongs to the tetrahydrofolate dehydrogenase/cyclohydrolase family. As to quaternary structure, homodimer.

It catalyses the reaction (6R)-5,10-methylene-5,6,7,8-tetrahydrofolate + NADP(+) = (6R)-5,10-methenyltetrahydrofolate + NADPH. The enzyme catalyses (6R)-5,10-methenyltetrahydrofolate + H2O = (6R)-10-formyltetrahydrofolate + H(+). It participates in one-carbon metabolism; tetrahydrofolate interconversion. Its function is as follows. Catalyzes the oxidation of 5,10-methylenetetrahydrofolate to 5,10-methenyltetrahydrofolate and then the hydrolysis of 5,10-methenyltetrahydrofolate to 10-formyltetrahydrofolate. This chain is Bifunctional protein FolD, found in Acidovorax ebreus (strain TPSY) (Diaphorobacter sp. (strain TPSY)).